The following is a 35-amino-acid chain: Putative neurotoxin (35 aa).

The region spanning 1-35 (KEGYPKNSEGCKITCLFNDPYCKGLCINLSTQADY) is the LCN-type CS-alpha/beta domain.

In terms of tissue distribution, expressed by the venom gland.

The protein localises to the secreted. Functionally, causes paralysis and death in insects (A.domestica). The sequence is that of Putative neurotoxin from Rhopalurus junceus (Caribbean blue scorpion).